We begin with the raw amino-acid sequence, 131 residues long: Snaclec coagulation factor IX/factor X-binding protein subunit A (131 aa).

One can recognise a C-type lectin domain in the interval 1-131 (DCLPGWSSHE…EEPQRFTCEI (131 aa)). 3 disulfide bridges follow: C2/C13, C30/C129, and C104/C121. S41, E43, and E47 together coordinate Ca(2+). E130 serves as a coordination point for Ca(2+).

The protein belongs to the snaclec family. In terms of assembly, heterodimer of subunits A and B; disulfide-linked. In terms of tissue distribution, expressed by the venom gland.

The protein localises to the secreted. Anticoagulant protein which binds to coagulation factor IX (F9) and coagulation factor X (F10) in the presence of calcium. It may bind the gamma-carboxyglutamic acid-domain regions of factors with a 1 to 1 stoichiometry. The dissociation constant (K(d)) are 6.6 nM for factor IX (F9) and 125 nM for factor X (F10). Does not bind carbohydrates. The chain is Snaclec coagulation factor IX/factor X-binding protein subunit A from Echis carinatus (Saw-scaled viper).